The sequence spans 161 residues: Phosphopantetheine adenylyltransferase (161 aa).

Residue Ser9 participates in substrate binding. Residues 9 to 10 and His17 contribute to the ATP site; that span reads SF. Substrate is bound by residues Lys41, Thr73, and Arg87. ATP contacts are provided by residues 88–90, Glu98, and 123–129; these read GLR and YSFISST.

The protein belongs to the bacterial CoaD family. Homohexamer. The cofactor is Mg(2+).

The protein localises to the cytoplasm. The catalysed reaction is (R)-4'-phosphopantetheine + ATP + H(+) = 3'-dephospho-CoA + diphosphate. It participates in cofactor biosynthesis; coenzyme A biosynthesis; CoA from (R)-pantothenate: step 4/5. Its function is as follows. Reversibly transfers an adenylyl group from ATP to 4'-phosphopantetheine, yielding dephospho-CoA (dPCoA) and pyrophosphate. In Desulforamulus reducens (strain ATCC BAA-1160 / DSM 100696 / MI-1) (Desulfotomaculum reducens), this protein is Phosphopantetheine adenylyltransferase.